Here is a 3423-residue protein sequence, read N- to C-terminus: MKNPKKKSGGFRIVNMLKRGVARVSPFGGLKRLPAGLLLGHGPIRMVLAILAFLRFTAIKPSLGLINRWGSVGKKEAMEIIKKFKKDLAAMLRIINARKEKKRRGADTSVGIVGLLLTTAMAAEVTRRGSAYYMYLDRNDAGEAISFPTTLGMNKCYIQIMDLGHMCDATMSYECPMLDEGVEPDDVDCWCNTTSTWVVYGTCHHKKGEARRSRRAVTLPSHSTRKLQTRSQTWLESREYTKHLIRVENWIFRNPGFALAAAAIAWLLGSSTSQKVIYLVMILLIAPAYSIRCIGVSNRDFVEGMSGGTWVDVVLEHGGCVTVMAQDKPTVDIELVTTTVSNMAEVRSYCYEASISDMASDSRCPTQGEAYLDKQSDTQYVCKRTLVDRGWGNGCGLFGKGSLVTCAKFACSKKMTGKSIQPENLEYRIMLSVHGSQHSGMIVNDTGHETDENRAKVEITPNSPRAEATLGGFGSLGLDCEPRTGLDFSDLYYLTMNNKHWLVHKEWFHDIPLPWHAGADTGTPHWNNKEALVEFKDAHAKRQTVVVLGSQEGAVHTALAGALEAEMDGAKGRLSSGHLKCRLKMDKLRLKGVSYSLCTAAFTFTKIPAETLHGTVTVEVQYAGTDGPCKVPAQMAVDMQTLTPVGRLITANPVITESTENSKMMLELDPPFGDSYIVIGVGEKKITHHWHRSGSTIGKAFEATVRGAKRMAVLGDTAWDFGSVGGALNSLGKGIHQIFGAAFKSLFGGMSWFSQILIGTLLMWLGLNTKNGSISLMCLALGGVLIFLSTAVSADVGCSVDFSKKETRCGTGVFVYNDVEAWRDRYKYHPDSPRRLAAAVKQAWEDGICGISSVSRMENIMWRSVEGELNAILEENGVQLTVVVGSVKNPMWRGPQRLPVPVNELPHGWKAWGKSYFVRAAKTNNSFVVDGDTLKECPLKHRAWNSFLVEDHGFGVFHTSVWLKVREDYSLECDPAVIGTAVKGKEAVHSDLGYWIESEKNDTWRLKRAHLIEMKTCEWPKSHTLWTDGIEESDLIIPKSLAGPLSHHNTREGYRTQMKGPWHSEELEIRFEECPGTKVHVEETCGTRGPSLRSTTASGRVIEEWCCRECTMPPLSFRAKDGCWYGMEIRPRKEPESNLVRSMVTAGSTDHMDHFSLGVLVILLMVQEGLKKRMTTKIIISTSMAVLVAMILGGFSMSDLAKLAILMGATFAEMNTGGDVAHLALIAAFKVRPALLVSFIFRANWTPRESMLLALASCLLQTAISALEGDLMVLINGFALAWLAIRAMVVPRTDNITLAILAALTPLARGTLLVAWRAGLATCGGFMLLSLKGKGSVKKNLPFVMALGLTAVRLVDPINVVGLLLLTRSGKRSWPPSEVLTAVGLICALAGGFAKADIEMAGPMAAVGLLIVSYVVSGKSVDMYIERAGDITWEKDAEVTGNSPRLDVALDESGDFSLVEDDGPPMREIILKVVLMTICGMNPIAIPFAAGAWYVYVKTGKRSGALWDVPAPKEVKKGETTDGVYRVMTRRLLGSTQVGVGVMQEGVFHTMWHVTKGSALRSGEGRLDPYWGDVKQDLVSYCGPWKLDAAWDGHSEVQLLAVPPGERARNIQTLPGIFKTKDGDIGAVALDYPAGTSGSPILDKCGRVIGLYGNGVVIKNGSYVSAITQGRREEETPVECFEPSMLKKKQLTVLDLHPGAGKTRRVLPEIVREAIKTRLRTVILAPTRVVAAEMEEALRGLPVRYMTTAVNVTHSGTEIVDLMCHATFTSRLLQPIRVPNYNLYIMDEAHFTDPSSIAARGYISTRVEMGEAAAIFMTATPPGTRDAFPDSNSPIMDTEVEVPERAWSSGFDWVTDHSGKTVWFVPSVRNGNEIAACLTKAGKRVIQLSRKTFETEFQKTKHQEWDFVVTTDISEMGANFKADRVIDSRRCLKPVILDGERVILAGPMPVTHASAAQRRGRIGRNPNKPGDEYLYGGGCAETDEDHAHWLEARMLLDNIYLQDGLIASLYRPEADKVAAIEGEFKLRTEQRKTFVELMKRGDLPVWLAYQVASAGITYTDRRWCFDGTTNNTIMEDSVPAEVWTRHGEKRVLKPRWMDARVCSDHAALKSFKEFAAGKRGAAFGVMEALGTLPGHMTERFQEAIDNLAVLMRAETGSRPYKAAAAQLPETLETIMLLGLLGTVSLGIFFVLMRNKGIGKMGFGMVTLGASAWLMWLSEIEPARIACVLIVVFLLLVVLIPEPEKQRSPQDNQMAIIIMVAVGLLGLITANELGWLERTKSDLSHLMGRREEGATIGFSMDIDLRPASAWAIYAALTTFITPAVQHAVTTSYNNYSLMAMATQAGVLFGMGKGMPFYAWDFGVPLLMIGCYSQLTPLTLIVAIILLVAHYMYLIPGLQAAAARAAQKRTAAGIMKNPVVDGIVVTDIDTMTIDPQVEKKMGQVLLIAVAVSSAILSRTAWGWGEAGALITAATSTLWEGSPNKYWNSSTATSLCNIFRGSYLAGASLIYTVTRNAGLVKRRGGGTGETLGEKWKARLNQMSALEFYSYKKSGITEVCREEARRALKDGVATGGHAVSRGSAKLRWLVERGYLQPYGKVIDLGCGRGGWSYYAATIRKVQEVKGYTKGGPGHEEPMLVQSYGWNIVRLKSGVDVFHMAAEPCDTLLCDIGESSSSPEVEEARTLRVLSMVGDWLEKRPGAFCIKVLCPYTSTMMETLERLQRRYGGGLVRVPLSRNSTHEMYWVSGAKSNTIKSVSTTSQLLLGRMDGPRRPVKYEEDVNLGSGTRAVVSCAEAPNMKIIGNRIERIRSEHAETWFFDENHPYRTWAYHGSYEAPTQGSASSLINGVVRLLSKPWDVVTGVTGIAMTDTTPYGQQRVFKEKVDTRVPDPQEGTRQVMSMVSSWLWKELGKHKRPRVCTKEEFINKVRSNAALGAIFEEEKEWKTAVEAVNDPRFWALVDKEREHHLRGECQSCVYNMMGKREKKQGEFGKAKGSRAIWYMWLGARFLEFEALGFLNEDHWMGRENSGGGVEGLGLQRLGYVLEEMSRIPGGRMYADDTAGWDTRISRFDLENEALITNQMEKGHRALALAIIKYTYQNKVVKVLRPAEKGKTVMDIISRQDQRGSGQVVTYALNTFTNLVVQLIRNMEAEEVLEMQDLWLLRRSEKVTNWLQSNGWDRLKRMAVSGDDCVVKPIDDRFAHALRFLNDMGKVRKDTQEWKPSTGWDNWEEVPFCSHHFNKLHLKDGRSIVVPCRHQDELIGRARVSPGAGWSIRETACLAKSYAQMWQLLYFHRRDLRLMANAICSSVPVDWVPTGRTTWSIHGKGEWMTTEDMLVVWNRVWIEENDHMEDKTPVTKWTDIPYLGKREDLWCGSLIGHRPRTTWAENIKNTVNMVRRIIGDEEKYMDYLSTQVRYLGEEGSTPGVL.

Positions 1–25 (MKNPKKKSGGFRIVNMLKRGVARVS) are disordered. The Cytoplasmic segment spans residues 1–104 (MKNPKKKSGG…INARKEKKRR (104 aa)). The segment at 37–72 (LLLGHGPIRMVLAILAFLRFTAIKPSLGLINRWGSV) is hydrophobic; homodimerization of capsid protein C. A propeptide spans 105-122 (GADTSVGIVGLLLTTAMA) (ER anchor for capsid protein C, removed in mature form by serine protease NS3). A helical membrane pass occupies residues 105 to 125 (GADTSVGIVGLLLTTAMAAEV). The Extracellular portion of the chain corresponds to 126–249 (TRRGSAYYMY…YTKHLIRVEN (124 aa)). Asn192 is a glycosylation site (N-linked (GlcNAc...) asparagine; by host). The chain crosses the membrane as a helical span at residues 250–269 (WIFRNPGFALAAAAIAWLLG). The Cytoplasmic segment spans residues 270-274 (SSTSQ). Residues 275-290 (KVIYLVMILLIAPAYS) form a helical membrane-spanning segment. The Extracellular segment spans residues 291 to 745 (IRCIGVSNRD…HQIFGAAFKS (455 aa)). Lys328 participates in a covalent cross-link: Glycyl lysine isopeptide (Lys-Gly) (interchain with G-Cter in ubiquitin). Cystine bridges form between Cys350–Cys406 and Cys382–Cys411. A fusion peptide region spans residues 388 to 401 (DRGWGNGCGLFGKG). The N-linked (GlcNAc...) asparagine; by host glycan is linked to Asn444. 2 disulfides stabilise this stretch: Cys480-Cys581 and Cys598-Cys629. Lys571 participates in a covalent cross-link: Glycyl lysine isopeptide (Lys-Gly) (interchain with G-Cter in ubiquitin). A helical transmembrane segment spans residues 746–767 (LFGGMSWFSQILIGTLLMWLGL). The Cytoplasmic segment spans residues 768–773 (NTKNGS). Residues 774–794 (ISLMCLALGGVLIFLSTAVSA) form a helical membrane-spanning segment. The Lumenal segment spans residues 795 to 1177 (DVGCSVDFSK…EGLKKRMTTK (383 aa)). Disulfide bonds link Cys798-Cys809, Cys849-Cys937, Cys973-Cys1017, Cys1074-Cys1123, Cys1085-Cys1106, and Cys1107-Cys1110. Asn924 and Asn1001 each carry an N-linked (GlcNAc...) asparagine; by host glycan. A helical transmembrane segment spans residues 1178 to 1198 (IIISTSMAVLVAMILGGFSMS). Over 1199–1220 (DLAKLAILMGATFAEMNTGGDV) the chain is Cytoplasmic. A helical membrane pass occupies residues 1221 to 1241 (AHLALIAAFKVRPALLVSFIF). The Lumenal segment spans residues 1242–1270 (RANWTPRESMLLALASCLLQTAISALEGD). Residues 1271–1291 (LMVLINGFALAWLAIRAMVVP) traverse the membrane as a helical segment. Residues 1292–1295 (RTDN) lie on the Cytoplasmic side of the membrane. The chain crosses the membrane as a helical span at residues 1296-1316 (ITLAILAALTPLARGTLLVAW). Over 1317 to 1345 (RAGLATCGGFMLLSLKGKGSVKKNLPFVM) the chain is Lumenal. The helical transmembrane segment at 1346–1366 (ALGLTAVRLVDPINVVGLLLL) threads the bilayer. The Cytoplasmic portion of the chain corresponds to 1367–1373 (TRSGKRS). The helical transmembrane segment at 1374–1394 (WPPSEVLTAVGLICALAGGFA) threads the bilayer. At 1395 to 1397 (KAD) the chain is on the lumenal side. Residues 1398-1418 (IEMAGPMAAVGLLIVSYVVSG) form a helical membrane-spanning segment. At 1419–1472 (KSVDMYIERAGDITWEKDAEVTGNSPRLDVALDESGDFSLVEDDGPPMREIILK) the chain is on the cytoplasmic side. Residues 1425–1464 (IERAGDITWEKDAEVTGNSPRLDVALDESGDFSLVEDDGP) are interacts with and activates NS3 protease. A disordered region spans residues 1429 to 1451 (GDITWEKDAEVTGNSPRLDVALD). An intramembrane region (helical) is located at residues 1473 to 1493 (VVLMTICGMNPIAIPFAAGAW). Topologically, residues 1494 to 2170 (YVYVKTGKRS…KAAAAQLPET (677 aa)) are lumenal. Residues 1503-1680 (SGALWDVPAP…RREEETPVEC (178 aa)) form the Peptidase S7 domain. Residues His1553, Asp1577, and Ser1637 each act as charge relay system; for serine protease NS3 activity in the active site. One can recognise a Helicase ATP-binding domain in the interval 1683–1839 (PSMLKKKQLT…DSNSPIMDTE (157 aa)). The interval 1687–1690 (KKKQ) is important for RNA-binding. Position 1696-1703 (1696-1703 (LHPGAGKT)) interacts with ATP. The DEAH box signature appears at 1787–1790 (DEAH). The region spanning 1834-2013 (PIMDTEVEVP…GLIASLYRPE (180 aa)) is the Helicase C-terminal domain. The residue at position 1891 (Lys1891) is an N6-acetyllysine; by host. Residues 2171–2191 (LETIMLLGLLGTVSLGIFFVL) form a helical membrane-spanning segment. The Lumenal portion of the chain corresponds to 2192–2195 (MRNK). An intramembrane region (helical) is located at residues 2196-2216 (GIGKMGFGMVTLGASAWLMWL). At 2217 to 2218 (SE) the chain is on the cytoplasmic side. The helical transmembrane segment at 2219–2239 (IEPARIACVLIVVFLLLVVLI) threads the bilayer. Residues 2240 to 2254 (PEPEKQRSPQDNQMA) are Lumenal-facing. The segment at residues 2255–2269 (IIIMVAVGLLGLITA) is an intramembrane region (helical). Residues 2270-2307 (NELGWLERTKSDLSHLMGRREEGATIGFSMDIDLRPAS) are Lumenal-facing. Residues 2308–2328 (AWAIYAALTTFITPAVQHAVT) constitute an intramembrane region (helical). Topologically, residues 2329–2344 (TSYNNYSLMAMATQAG) are lumenal. Residues 2345-2365 (VLFGMGKGMPFYAWDFGVPLL) form a helical membrane-spanning segment. Residues 2366 to 2375 (MIGCYSQLTP) are Cytoplasmic-facing. Residues 2376 to 2396 (LTLIVAIILLVAHYMYLIPGL) form a helical membrane-spanning segment. Over 2397–2441 (QAAAARAAQKRTAAGIMKNPVVDGIVVTDIDTMTIDPQVEKKMGQ) the chain is Lumenal. Residues 2442–2462 (VLLIAVAVSSAILSRTAWGWG) form a helical membrane-spanning segment. Over 2463-3423 (EAGALITAAT…GEEGSTPGVL (961 aa)) the chain is Cytoplasmic. The mRNA cap 0-1 NS5-type MT domain maps to 2521 to 2785 (GGGTGETLGE…DVNLGSGTRA (265 aa)). 2533–2539 (KARLNQM) contributes to the GTP binding site. An S-adenosyl-L-methionine-binding site is contributed by Ser2576. Phosphoserine is present on Ser2576. The For 2'-O-MTase activity role is filled by Lys2581. Residues 2597–2600 (VIDL) form an SUMO-interacting motif (SIM) region. Positions 2606, 2607, 2624, 2625, 2630, 2631, 2651, 2652, 2666, and 2667 each coordinate S-adenosyl-L-methionine. The active-site For 2'-O-MTase activity is the Asp2666. Position 2669 to 2675 (2669 to 2675 (ESSSSPE)) interacts with GTP. Residue Lys2702 is the For 2'-O-MTase activity of the active site. Position 2733–2735 (2733–2735 (RNS)) interacts with GTP. Glu2738 functions as the For 2'-O-MTase activity in the catalytic mechanism. An S-adenosyl-L-methionine-binding site is contributed by Tyr2740. The Nuclear localization signal (NLS) motif lies at 2908 to 2914 (KHKRPRV). Glu2959, His2963, Cys2968, and Cys2971 together coordinate Zn(2+). In terms of domain architecture, RdRp catalytic spans 3049-3199 (GRMYADDTAG…KPIDDRFAHA (151 aa)). Zn(2+) contacts are provided by His3234, Cys3250, and Cys3369.

This sequence in the N-terminal section; belongs to the class I-like SAM-binding methyltransferase superfamily. mRNA cap 0-1 NS5-type methyltransferase family. As to quaternary structure, homodimer. Interacts with host SERTAD3; this interaction promotes capsid protein C degradation. Interacts with host CAPRIN1; this interaction is probably linked to the inhibition of stress granules formation by the virus. Interacts with host G3BP1; this interaction is probably linked to the inhibition of stress granules formation by the virus. In terms of assembly, forms heterodimers with envelope protein E in the endoplasmic reticulum and Golgi. Interacts with non-structural protein 2A. Homodimer; in the endoplasmic reticulum and Golgi. Interacts with host TYRO3, AXL and DC-SIGN proteins. Interacts with non-structural protein 2A. Interacts with host HAVCR1; this interaction likely mediates virus attachment to host cell. Interacts with host NCAM1. Interacts with host HSPA5. Interacts with Aedes aegypti SRPN25, APY and venom allergen-1 salivary proteins; the interactions do not affect Zika virus replication in human endothelial cells and keratinocytes. As to quaternary structure, homodimer; Homohexamer when secreted. Interacts with host TBK1. Interacts with host USP8. Interacts with envelope protein E. In terms of assembly, interacts with the structural protein prM/E complex, and the NS2B/NS3 protease complex. Forms a heterodimer with serine protease NS3. May form homooligomers. Interacts with human SPCS1. Interacts with non-structural protein 2A. As to quaternary structure, forms a heterodimer with NS2B. Interacts with NS4B. Interacts with unphosphorylated RNA-directed RNA polymerase NS5; this interaction stimulates RNA-directed RNA polymerase NS5 guanylyltransferase activity. Interacts with non-structural protein 2A. Interacts with host SHFL; this interaction promotes NS3 degradation via a lysosome-dependent pathway. Interacts with host CEP63; this interaction disorganizes the centrosome and inhibits host innate immune response. In terms of assembly, may interact with host ANKLE2; the interaction may cause defects in brain development, such as microcephaly. May interact with host SRPRA and SEC61G. Interacts with serine protease NS3. Interacts with NS1. As to quaternary structure, homodimer; dimerization may negatively regulate the GTase activity, a crucial step in the capping process. Interacts with host STAT2; this interaction inhibits the phosphorylation of the latter, and, when all viral proteins are present (polyprotein), targets STAT2 for degradation. Interacts with host TBK1 and IKBKE; these interactions lead to the inhibition of the host RIG-I signaling pathway. Interacts with host PAF1 complex; the interaction may prevent the recruitment of the host PAF1 complex to interferon-responsive genes, and thus reduces the immune response. Interacts with serine protease NS3. Interacts with host KPNA2. Interacts with host ZSWIM8; this interaction allows STAT2 binding to ZSWIM8 and subsequent proteasomal degradation leading to inhibition of interferon signaling. Post-translationally, specific enzymatic cleavages in vivo yield mature proteins. Cleavages in the lumen of endoplasmic reticulum are performed by host signal peptidase, whereas cleavages in the cytoplasmic side are performed by serine protease NS3. Signal cleavage at the 2K-4B site requires a prior NS3 protease-mediated cleavage at the 4A-2K site. Cleaved in post-Golgi vesicles by a host furin, releasing the mature small envelope protein M, and peptide pr. This cleavage is incomplete as up to 30% of viral particles still carry uncleaved prM. In terms of processing, N-glycosylation plays a role in virulence in mammalian and mosquito hosts, but may have no effect on neurovirulence. Post-translationally, ubiquitination by host TRIM7 promotes virus attachment and fusion of the virus and the host endosome membrane. N-glycosylated. The excreted form is glycosylated, which is required for efficient secretion of the protein from infected cells. In terms of processing, ubiquitination by host TRIM22 leads to proteasomal degradation. Post-translationally, acetylated by host KAT5. Acetylation modulates NS3 RNA-binding and unwinding activities and plays an important positive role for viral replication. Phosphorylated on serines residues. This phosphorylation may trigger NS5 nuclear localization. In terms of processing, sumoylated, required for regulating IFN induced interferon stimulated genes/ISGs.

It is found in the virion. Its subcellular location is the host nucleus. The protein localises to the host cytoplasm. It localises to the host perinuclear region. The protein resides in the secreted. It is found in the virion membrane. Its subcellular location is the host endoplasmic reticulum membrane. The catalysed reaction is a 5'-end (5'-triphosphoguanosine)-ribonucleoside in mRNA + S-adenosyl-L-methionine = a 5'-end (N(7)-methyl 5'-triphosphoguanosine)-ribonucleoside in mRNA + S-adenosyl-L-homocysteine. It catalyses the reaction a 5'-end (N(7)-methyl 5'-triphosphoguanosine)-ribonucleoside in mRNA + S-adenosyl-L-methionine = a 5'-end (N(7)-methyl 5'-triphosphoguanosine)-(2'-O-methyl-ribonucleoside) in mRNA + S-adenosyl-L-homocysteine + H(+). It carries out the reaction RNA(n) + a ribonucleoside 5'-triphosphate = RNA(n+1) + diphosphate. The enzyme catalyses Selective hydrolysis of -Xaa-Xaa-|-Yaa- bonds in which each of the Xaa can be either Arg or Lys and Yaa can be either Ser or Ala.. The catalysed reaction is a ribonucleoside 5'-triphosphate + H2O = a ribonucleoside 5'-diphosphate + phosphate + H(+). It catalyses the reaction ATP + H2O = ADP + phosphate + H(+). Its function is as follows. Plays a role in virus budding by binding to the cell membrane and gathering the viral RNA into a nucleocapsid that forms the core of the mature virus particle. During virus entry, may induce genome penetration into the host cytoplasm after hemifusion induced by the surface proteins. Can migrate to the cell nucleus where it modulates host functions. Inhibits the integrated stress response (ISR) in the infected cell. Inhibits RNA silencing by interfering with host Dicer. In terms of biological role, prevents premature fusion activity of envelope proteins in trans-Golgi by binding to envelope protein E at pH 6.0. After virion release in extracellular space, gets dissociated from E dimers. Functionally, plays a role in host immune defense modulation and protection of envelope protein E during virion synthesis. PrM-E cleavage is inefficient, many virions are only partially matured and immature prM-E proteins could play a role in immune evasion. Contributes to fetal microcephaly in humans. Acts as a chaperone for envelope protein E during intracellular virion assembly by masking and inactivating envelope protein E fusion peptide. prM is the only viral peptide matured by host furin in the trans-Golgi network probably to avoid catastrophic activation of the viral fusion activity in acidic Golgi compartment prior to virion release. Its function is as follows. May play a role in virus budding. Exerts cytotoxic effects by activating a mitochondrial apoptotic pathway through M ectodomain. May display a viroporin activity. Binds to host cell surface receptors and mediates fusion between viral and cellular membranes. Efficient virus attachment to cell is, at least in part, mediated by host HAVCR1 in a cell-type specific manner. In addition, host NCAM1 can also be used as entry receptor. Interaction with host HSPA5 plays an important role in the early stages of infection as well. Envelope protein is synthesized in the endoplasmic reticulum and forms a heterodimer with protein prM. The heterodimer plays a role in virion budding in the ER, and the newly formed immature particle is covered with 60 spikes composed of heterodimers between precursor prM and envelope protein E. The virion is transported to the Golgi apparatus where the low pH causes the dissociation of PrM-E heterodimers and formation of E homodimers. PrM-E cleavage is inefficient, many virions are only partially matured and immature prM-E proteins could play a role in immune evasion. In terms of biological role, plays a role in the inhibition of host RLR-induced interferon-beta activation by targeting TANK-binding kinase 1/TBK1. In addition, recruits the host deubiquitinase USP8 to cleave 'Lys-11'-linked polyubiquitin chains from caspase-1/CASP1 thus inhibiting its proteasomal degradation. In turn, stabilized CASP1 promotes cleavage of cGAS, which inhibits its ability to recognize mitochondrial DNA release and initiate type I interferon signaling. Functionally, component of the viral RNA replication complex that recruits genomic RNA, the structural protein prM/E complex, and the NS2B/NS3 protease complex to the virion assembly site and orchestrates virus morphogenesis. Antagonizes also the host MDA5-mediated induction of alpha/beta interferon antiviral response. May disrupt adherens junction formation and thereby impair proliferation of radial cells in the host cortex. Its function is as follows. Required cofactor for the serine protease function of NS3. Displays three enzymatic activities: serine protease, NTPase and RNA helicase. NS3 serine protease, in association with NS2B, performs its autocleavage and cleaves the polyprotein at dibasic sites in the cytoplasm: C-prM, NS2A-NS2B, NS2B-NS3, NS3-NS4A, NS4A-2K and NS4B-NS5. NS3 RNA helicase binds RNA and unwinds dsRNA in the 3' to 5' direction. Inhibits the integrated stress response (ISR) in the infected cell by blocking stress granules assembly. Disrupts host centrosome organization in a CEP63-dependent manner to degrade host TBK1 and inhibits innate immune response. In terms of biological role, regulates the ATPase activity of the NS3 helicase activity. NS4A allows NS3 helicase to conserve energy during unwinding. Cooperatively with NS4B suppresses the Akt-mTOR pathway and leads to cellular dysregulation. By inhibiting host ANKLE2 functions, may cause defects in brain development, such as microcephaly. Also antagonizes the host MDA5-mediated induction of alpha/beta interferon antiviral response. Inhibits the integrated stress response (ISR) in the infected cell by blocking stress granules assembly. Functionally, functions as a signal peptide for NS4B and is required for the interferon antagonism activity of the latter. Its function is as follows. Induces the formation of ER-derived membrane vesicles where the viral replication takes place. Also plays a role in the inhibition of host RLR-induced interferon-beta production at TANK-binding kinase 1/TBK1 level. Cooperatively with NS4A suppresses the Akt-mTOR pathway and leads to cellular dysregulation. Replicates the viral (+) and (-) RNA genome, and performs the capping of genomes in the cytoplasm. Methylates viral RNA cap at guanine N-7 and ribose 2'-O positions. Once sufficient NS5 is expressed, binds to the cap-proximal structure and inhibits further translation of the viral genome. Besides its role in RNA genome replication, also prevents the establishment of a cellular antiviral state by blocking the interferon-alpha/beta (IFN-alpha/beta) signaling pathway. Mechanistically, interferes with host kinases TBK1 and IKKE upstream of interferon regulatory factor 3/IRF3 to inhibit the RIG-I pathway. Also antagonizes type I interferon signaling by targeting STAT2 for degradation by the proteasome thereby preventing activation of JAK-STAT signaling pathway. Mechanistically, acts as a scaffold protein to connect host ZSWIM8/CUL3 ligase complex and STAT2, leading to STAT2 degradation. Within the host nucleus, disrupts host SUMO1 and STAT2 co-localization with PML, resulting in PML degradation. May also reduce immune responses by preventing the recruitment of the host PAF1 complex to interferon-responsive genes. The polypeptide is Genome polyprotein (Zika virus (isolate ZIKV/Human/French Polynesia/10087PF/2013) (ZIKV)).